A 435-amino-acid polypeptide reads, in one-letter code: MSQKPHLNLIVIGHVDHGKSTLIGRLLMDRGFIDEKTVKEAEEAAKKLGKDSEKYAFLMDRLKEERERGVTINLSFMRFETRKYFFTVIDAPGHRDFVKNMITGASQADAAILVVSAKKGEYEAGMSAEGQTREHIILSKTMGINQVIVAINKMDLADTPYDEKRFKEIVDTVSKFMKSFGFDMNKVKFVPVVAPDGDNVTHKSTKMPWYNGPTLEELLDQLEIPPKPVDKPLRIPIQEVYSISGVGVVPVGRIESGVLKVGDKIVFMPVGKIGEVRSIETHHTKIDKAEPGDNIGFNVRGVEKKDVKRGDVAGSVQNPPTVADEFTAQVIVIWHPTAVGVGYTPVLHVHTASIACRVSEITSRIDPKTGKEAEKNPQFIKAGDSAIVKFKPIKELVAEKFREFPALGRFAMRDMGKTVGVGVIIDVKPRKVEVK.

One can recognise a tr-type G domain in the interval 4–229 (KPHLNLIVIG…DQLEIPPKPV (226 aa)). Residues 13 to 20 (GHVDHGKS) form a G1 region. GTP is bound at residue 13–20 (GHVDHGKS). Position 20 (Ser20) interacts with Mg(2+). The interval 69–73 (GVTIN) is G2. A G3 region spans residues 90-93 (DAPG). GTP-binding positions include 90–94 (DAPGH) and 152–155 (NKMD). A G4 region spans residues 152-155 (NKMD). Residues 193 to 195 (VAP) are G5.

This sequence belongs to the TRAFAC class translation factor GTPase superfamily. Classic translation factor GTPase family. EF-Tu/EF-1A subfamily.

Its subcellular location is the cytoplasm. The enzyme catalyses GTP + H2O = GDP + phosphate + H(+). Functionally, GTP hydrolase that promotes the GTP-dependent binding of aminoacyl-tRNA to the A-site of ribosomes during protein biosynthesis. The polypeptide is Elongation factor 1-alpha (Sulfolobus acidocaldarius (strain ATCC 33909 / DSM 639 / JCM 8929 / NBRC 15157 / NCIMB 11770)).